We begin with the raw amino-acid sequence, 704 residues long: Preterpestacin I synthase tpcA (704 aa).

The segment at methionine 1–tryptophan 329 is terpene cyclase. Aspartate 96 is a binding site for Mg(2+). Substrate contacts are provided by residues aspartate 96, asparagine 231, serine 235–glutamate 239, and arginine 325–glutamine 326. The DDXXD 1 motif lies at aspartate 96–glutamate 100. Residues asparagine 231–glutamate 239 carry the NSE/DTE motif. Residues lysine 330 to serine 688 form a prenyltransferase region. The tract at residues lysine 361–valine 380 is disordered. Residues lysine 406, arginine 409, and histidine 438 each contribute to the isopentenyl diphosphate site. Positions 445 and 449 each coordinate Mg(2+). The DDXXD 2 motif lies at aspartate 445–aspartate 449. Arginine 454 provides a ligand contact to dimethylallyl diphosphate. Arginine 455 lines the isopentenyl diphosphate pocket. Residues lysine 532, threonine 533, glutamine 568, asparagine 575, lysine 583, and lysine 593 each coordinate dimethylallyl diphosphate.

The protein in the N-terminal section; belongs to the terpene synthase family. It in the C-terminal section; belongs to the FPP/GGPP synthase family. As to quaternary structure, hexamer. Requires Mg(2+) as cofactor.

The enzyme catalyses isopentenyl diphosphate + (2E,6E)-farnesyl diphosphate = (2E,6E,10E)-geranylgeranyl diphosphate + diphosphate. The catalysed reaction is isopentenyl diphosphate + (2E,6E,10E)-geranylgeranyl diphosphate = (2E,6E,10E,14E)-geranylfarnesyl diphosphate + diphosphate. It participates in secondary metabolite biosynthesis; terpenoid biosynthesis. Bifunctional terpene synthase; part of the gene cluster that mediates the biosynthesis of terpestacin. The bifunctional terpene synthase tpcA converts isopentenyl diphosphate (IPP) and dimethylallyl diphosphate (DMAPP) into the sesterterpene preterpestacin I. The C-terminal prenyltransferase (PT) domain of tpcA catalyzes formation of GFPP, whereas the N-terminal terpene cyclase (TC) domain catalyzes the cyclization of GFPP into preterpestacin I. The cytochrome P450 monooxygenase tpcB then hydroxylates preterpestacin I to yield 24-hydroxypreterpstacin I (renamed as preterpestacin II) whereas the cytochrome P450 monooxygenase tpcC further hydroxylates preterpestacin II to yield 16,17-dihydroxypreterpestacin II (renamed as preterpestacin III). Finally, the FAD-dependent monooxygenase tpcD converts preterpestacin III into terpestacin. The sequence is that of Preterpestacin I synthase tpcA from Cochliobolus heterostrophus (strain C5 / ATCC 48332 / race O) (Southern corn leaf blight fungus).